The chain runs to 44 residues: Putative keratin-associated protein 20-4 (44 aa).

It belongs to the KRTAP type 20 family. In terms of assembly, interacts with hair keratins.

Its function is as follows. In the hair cortex, hair keratin intermediate filaments are embedded in an interfilamentous matrix, consisting of hair keratin-associated proteins (KRTAP), which are essential for the formation of a rigid and resistant hair shaft through their extensive disulfide bond cross-linking with abundant cysteine residues of hair keratins. The matrix proteins include the high-sulfur and high-glycine-tyrosine keratins. The polypeptide is Putative keratin-associated protein 20-4 (KRTAP20-4) (Homo sapiens (Human)).